Reading from the N-terminus, the 128-residue chain is MTTLKTMTRVQLGAMGEALAVDYLTSMGLRILNRNWRCRYGELDVIACDAATRTVVFVEVKTRTGDGYGGLAHAVTERKVRRLRRLAGLWLADQEERWAAVRIDVIGVRVGPKNSGRTPELTHLQGIG.

The protein belongs to the UPF0102 family.

In Mycobacterium bovis (strain BCG / Pasteur 1173P2), this protein is UPF0102 protein BCG_2919c.